The following is a 266-amino-acid chain: Phosphate import ATP-binding protein PstB 1 (266 aa).

The region spanning 21 to 261 (ISTQDLSVFY…PKGEITEDYI (241 aa)) is the ABC transporter domain. 54–61 (GGSGSGKS) contributes to the ATP binding site.

It belongs to the ABC transporter superfamily. Phosphate importer (TC 3.A.1.7) family. As to quaternary structure, the complex is composed of two ATP-binding proteins (PstB), two transmembrane proteins (PstC and PstA) and a solute-binding protein (PstS).

It is found in the cell membrane. The enzyme catalyses phosphate(out) + ATP + H2O = ADP + 2 phosphate(in) + H(+). Its function is as follows. Part of the ABC transporter complex PstSACB involved in phosphate import. Responsible for energy coupling to the transport system. This chain is Phosphate import ATP-binding protein PstB 1, found in Lactobacillus johnsonii (strain CNCM I-12250 / La1 / NCC 533).